A 244-amino-acid chain; its full sequence is 1-(5-phosphoribosyl)-5-[(5-phosphoribosylamino)methylideneamino] imidazole-4-carboxamide isomerase (244 aa).

The active-site Proton acceptor is the Asp10. The Proton donor role is filled by Asp132.

Belongs to the HisA/HisF family.

The protein resides in the cytoplasm. The catalysed reaction is 1-(5-phospho-beta-D-ribosyl)-5-[(5-phospho-beta-D-ribosylamino)methylideneamino]imidazole-4-carboxamide = 5-[(5-phospho-1-deoxy-D-ribulos-1-ylimino)methylamino]-1-(5-phospho-beta-D-ribosyl)imidazole-4-carboxamide. The protein operates within amino-acid biosynthesis; L-histidine biosynthesis; L-histidine from 5-phospho-alpha-D-ribose 1-diphosphate: step 4/9. This is 1-(5-phosphoribosyl)-5-[(5-phosphoribosylamino)methylideneamino] imidazole-4-carboxamide isomerase from Xanthomonas campestris pv. campestris (strain 8004).